A 149-amino-acid chain; its full sequence is General odorant-binding protein 57c (149 aa).

The first 16 residues, 1-16 (MLKLWLICILTVSVVS), serve as a signal peptide directing secretion. Cystine bridges form between Cys-32/Cys-70, Cys-66/Cys-117, and Cys-106/Cys-126.

It belongs to the PBP/GOBP family.

In terms of biological role, present in the aqueous fluid surrounding olfactory sensory dendrites and are thought to aid in the capture and transport of hydrophobic odorants into and through this fluid. The chain is General odorant-binding protein 57c from Drosophila melanogaster (Fruit fly).